Consider the following 119-residue polypeptide: Beta-2-microglobulin (119 aa).

The first 20 residues, 1 to 20, serve as a signal peptide directing secretion; that stretch reads MARFVVVALLALLSLSGLEA. Residues 25–114 enclose the Ig-like C1-type domain; the sequence is PKIQVYSRHP…VTFPTPKTVK (90 aa). The cysteines at positions 45 and 100 are disulfide-linked.

It belongs to the beta-2-microglobulin family. As to quaternary structure, heterodimer of an alpha chain and a beta chain. Beta-2-microglobulin is the beta-chain of major histocompatibility complex class I molecules.

The protein resides in the secreted. Component of the class I major histocompatibility complex (MHC). Involved in the presentation of peptide antigens to the immune system. The polypeptide is Beta-2-microglobulin (B2M) (Alouatta seniculus (Red howler monkey)).